The primary structure comprises 174 residues: Small ribosomal subunit protein uS5 (174 aa).

The S5 DRBM domain maps to Leu-19–Ile-82.

It belongs to the universal ribosomal protein uS5 family. As to quaternary structure, part of the 30S ribosomal subunit. Contacts proteins S4 and S8.

Its function is as follows. With S4 and S12 plays an important role in translational accuracy. Located at the back of the 30S subunit body where it stabilizes the conformation of the head with respect to the body. This is Small ribosomal subunit protein uS5 from Aromatoleum aromaticum (strain DSM 19018 / LMG 30748 / EbN1) (Azoarcus sp. (strain EbN1)).